The following is a 95-amino-acid chain: uncharacterized protein (95 aa).

An N-terminal signal peptide occupies residues 1 to 19; that stretch reads MAILMLSLQLILLLIPSIS. N-linked (GlcNAc...) asparagine glycosylation is found at asparagine 38 and asparagine 41.

It localises to the secreted. This is an uncharacterized protein from Homo sapiens (Human).